Consider the following 201-residue polypeptide: Dermatopontin (201 aa).

A signal peptide spans 1–18; that stretch reads MDLSLLWVLLPLVTMAWG. The residue at position 19 (Q19) is a Pyrrolidone carboxylic acid. The residue at position 23 (Y23) is a Sulfotyrosine. 4 consecutive repeat copies span residues 26–79, 70–75, 80–135, and 125–130. Residues 26-186 are 2 X 53-55 AA tandem repeats; that stretch reads PYQQYHDYSD…AVERDRQWKF (161 aa). 5 cysteine pairs are disulfide-bonded: C50-C77, C90-C132, C106-C133, C139-C196, and C143-C189. Positions 70 to 186 are 3 X 6 AA repeats of D-R-[EQ]-W-[NQK]-[FY]; that stretch reads DRQWNYACMP…AVERDRQWKF (117 aa). Y162, Y164, Y166, and Y167 each carry sulfotyrosine. A 3-3 repeat occupies 181–186; that stretch reads DRQWKF. Y194 carries the sulfotyrosine modification.

The protein belongs to the dermatopontin family. In terms of assembly, interacts with TGFB1, DCN and collagen. Sulfated on tyrosine residue(s). In terms of tissue distribution, expressed in fibroblasts, heart, skeletal muscle, brain and pancreas. Expressed at an intermediate level in lung and kidney, and at a low level in liver and placenta. Expressed at a lower level in fibroblasts from hypertrophic scar lesional skin and in fibroblasts from patients with systemic sclerosis than in normal skin fibroblasts.

The protein localises to the secreted. Its subcellular location is the extracellular space. It is found in the extracellular matrix. Seems to mediate adhesion by cell surface integrin binding. May serve as a communication link between the dermal fibroblast cell surface and its extracellular matrix environment. Enhances TGFB1 activity. Inhibits cell proliferation. Accelerates collagen fibril formation, and stabilizes collagen fibrils against low-temperature dissociation. This Homo sapiens (Human) protein is Dermatopontin (DPT).